The following is a 431-amino-acid chain: GTPase Obg (431 aa).

The region spanning 1 to 158 is the Obg domain; it reads MFVDQVKISL…IEVTLELKLL (158 aa). The segment at 118–144 is disordered; that stretch reads KGGRGGRGNSRFASPRNPAPDFSENGE. The OBG-type G domain occupies 159–330; it reads ADVGLVGFPS…LLYAIADKLE (172 aa). GTP contacts are provided by residues 165–172, 190–194, 212–215, 282–285, and 311–313; these read GFPSVGKS, FTTIK, DLPG, NKMD, and STF. Mg(2+) contacts are provided by serine 172 and threonine 192. The region spanning 353–431 is the OCT domain; that stretch reads KHTPSQDKFT…ILGGEFEFVE (79 aa).

Belongs to the TRAFAC class OBG-HflX-like GTPase superfamily. OBG GTPase family. Monomer. It depends on Mg(2+) as a cofactor.

The protein localises to the cytoplasm. Its function is as follows. An essential GTPase which binds GTP, GDP and possibly (p)ppGpp with moderate affinity, with high nucleotide exchange rates and a fairly low GTP hydrolysis rate. Plays a role in control of the cell cycle, stress response, ribosome biogenesis and in those bacteria that undergo differentiation, in morphogenesis control. In Staphylococcus saprophyticus subsp. saprophyticus (strain ATCC 15305 / DSM 20229 / NCIMB 8711 / NCTC 7292 / S-41), this protein is GTPase Obg.